We begin with the raw amino-acid sequence, 399 residues long: Methylthioribose kinase (399 aa).

ATP-binding positions include Asn40, Lys57, and 111 to 113 (EDL). Asp229 contributes to the substrate binding site. 246 to 248 (DAE) provides a ligand contact to ATP. Arg344 contributes to the substrate binding site.

The protein belongs to the methylthioribose kinase family. Homodimer.

It carries out the reaction 5-(methylsulfanyl)-D-ribose + ATP = 5-(methylsulfanyl)-alpha-D-ribose 1-phosphate + ADP + H(+). It functions in the pathway amino-acid biosynthesis; L-methionine biosynthesis via salvage pathway; S-methyl-5-thio-alpha-D-ribose 1-phosphate from S-methyl-5'-thioadenosine (hydrolase route): step 2/2. Functionally, catalyzes the phosphorylation of methylthioribose into methylthioribose-1-phosphate. The protein is Methylthioribose kinase of Erwinia tasmaniensis (strain DSM 17950 / CFBP 7177 / CIP 109463 / NCPPB 4357 / Et1/99).